A 269-amino-acid chain; its full sequence is MIRTLLLSTLVAGALSCGVSTYAPDMSRMLGGEEARPNSWPWQVSLQYSSNGQWYHTCGGSLIANSWVLTAAHCISSSGIYRVMLGQHNLYVAESGSLAVSVSKIVVHKDWNSDQVSKGNDIALLKLANPVSLTDKIQLACLPPAGTILPNNYPCYVTGWGRLQTNGALPDDLKQGQLLVVDYATCSSSGWWGSTVKTNMICAGGDGVICTCNGDSGGPLNCQASDGRWEVHGIGSLTSVLGCNYYYKPSIFTRVSNYNDWINSVIANN.

Residues 1–16 (MIRTLLLSTLVAGALS) form the signal peptide. Residues 17–28 (CGVSTYAPDMSR) constitute a propeptide, activation peptide. The Peptidase S1 domain maps to 29–267 (MLGGEEARPN…YNDWINSVIA (239 aa)). A disulfide bridge links Cys58 with Cys74. Active-site charge relay system residues include His73 and Asp121. Intrachain disulfides connect Cys155/Cys222, Cys186/Cys202, and Cys212/Cys243. Ser216 (charge relay system) is an active-site residue.

Belongs to the peptidase S1 family. Elastase subfamily. Pancreas.

It is found in the secreted. The enzyme catalyses Preferential cleavage: Leu-|-Xaa, Met-|-Xaa and Phe-|-Xaa. Hydrolyzes elastin.. Acts upon elastin. The sequence is that of Chymotrypsin-like elastase family member 2B (CELA2B) from Homo sapiens (Human).